The chain runs to 401 residues: 1-deoxy-D-xylulose 5-phosphate reductoisomerase (401 aa).

The NADPH site is built by T11, G12, S13, I14, R38, N39, and N125. 1-deoxy-D-xylulose 5-phosphate is bound at residue K126. E127 is an NADPH binding site. D151 provides a ligand contact to Mn(2+). 4 residues coordinate 1-deoxy-D-xylulose 5-phosphate: S152, E153, S179, and H202. E153 lines the Mn(2+) pocket. G208 provides a ligand contact to NADPH. Residues S215, N220, K221, and E224 each coordinate 1-deoxy-D-xylulose 5-phosphate. E224 contacts Mn(2+).

The protein belongs to the DXR family. It depends on Mg(2+) as a cofactor. Requires Mn(2+) as cofactor.

The enzyme catalyses 2-C-methyl-D-erythritol 4-phosphate + NADP(+) = 1-deoxy-D-xylulose 5-phosphate + NADPH + H(+). Its pathway is isoprenoid biosynthesis; isopentenyl diphosphate biosynthesis via DXP pathway; isopentenyl diphosphate from 1-deoxy-D-xylulose 5-phosphate: step 1/6. In terms of biological role, catalyzes the NADPH-dependent rearrangement and reduction of 1-deoxy-D-xylulose-5-phosphate (DXP) to 2-C-methyl-D-erythritol 4-phosphate (MEP). The chain is 1-deoxy-D-xylulose 5-phosphate reductoisomerase from Paraburkholderia phymatum (strain DSM 17167 / CIP 108236 / LMG 21445 / STM815) (Burkholderia phymatum).